A 147-amino-acid polypeptide reads, in one-letter code: MPGKKSPYGLFAGGKLKRKRKRFKWNDVTYKRKMLGLVEKYDPLEGAPMARGIVLEKVGVEARKPNAAVRKCVRVQLVKNGKVVTAFVPLDGSLNYINEHDEVVIERIGGPEGRSLGDIPGVRFKVIKVNGVSLWAIWSGKKQKPTR.

This sequence belongs to the universal ribosomal protein uS12 family. Part of the 30S ribosomal subunit.

Functionally, with S4 and S5 plays an important role in translational accuracy. Located at the interface of the 30S and 50S subunits. This Pyrobaculum arsenaticum (strain DSM 13514 / JCM 11321 / PZ6) protein is Small ribosomal subunit protein uS12.